The following is a 482-amino-acid chain: Glycogen synthase (482 aa).

Residue Lys15 participates in ADP-alpha-D-glucose binding.

It belongs to the glycosyltransferase 1 family. Bacterial/plant glycogen synthase subfamily.

The enzyme catalyses [(1-&gt;4)-alpha-D-glucosyl](n) + ADP-alpha-D-glucose = [(1-&gt;4)-alpha-D-glucosyl](n+1) + ADP + H(+). Its pathway is glycan biosynthesis; glycogen biosynthesis. Its function is as follows. Synthesizes alpha-1,4-glucan chains using ADP-glucose. The sequence is that of Glycogen synthase from Elusimicrobium minutum (strain Pei191).